We begin with the raw amino-acid sequence, 898 residues long: Sodium/hydrogen exchanger 5 (898 aa).

Topologically, residues 1-48 are cytoplasmic; the sequence is MLSAALLLLPGLPLAGAGATEEPTQESGPLGEPPPGLALFRWQWHEVE. A helical membrane pass occupies residues 49-69; the sequence is APYLVALWILVASLAKIVFHL. At 70 to 76 the chain is on the extracellular side; sequence SRKVTSL. The chain crosses the membrane as a helical span at residues 77–97; it reads VPESCLLILLGLVLGGIVLAV. Residues 98–106 lie on the Cytoplasmic side of the membrane; it reads AKKAEYQLE. Residues 107–127 traverse the membrane as a helical segment; sequence PGTFFLFLLPPIVLDSGYFMP. Over 128–137 the chain is Extracellular; the sequence is SRLFFDNLGA. The chain crosses the membrane as a helical span at residues 138-158; that stretch reads ILTYAVVGTLWNAFTTGVALW. The Cytoplasmic portion of the chain corresponds to 159–176; sequence GLQQAGLVAPRVQAGLLD. A helical membrane pass occupies residues 177–197; that stretch reads FLLFGSLISAVDPVAVLAVFE. Topologically, residues 198-203 are extracellular; sequence EVHVNQ. The helical transmembrane segment at 204-224 threads the bilayer; the sequence is TLFIIIFGESLLNDAVTVVLY. Topologically, residues 225–249 are cytoplasmic; that stretch reads KVCNSFVEMGSANVQATDYLKGVAS. A helical membrane pass occupies residues 250-270; that stretch reads LFVVSLGGAAVGLVFAFLLAL. The Extracellular portion of the chain corresponds to 271–279; it reads TTRFTKRVR. Residues 280–300 traverse the membrane as a helical segment; the sequence is IIEPLLVFLLAYAAYLTAEMA. The Cytoplasmic segment spans residues 301 to 334; the sequence is SLSAILAVTMCGLGCKKYVEANISHKSRTAVKYT. A helical membrane pass occupies residues 335 to 355; sequence MKTLASCAETVIFMLLGISAV. At 356-363 the chain is on the extracellular side; sequence DSSKWAWD. The chain crosses the membrane as a helical span at residues 364–384; that stretch reads SGLVLGTLFFILFFRALGVVL. Over 385–401 the chain is Cytoplasmic; it reads QTWALNQFRLVPLDKID. A helical membrane pass occupies residues 402-422; the sequence is QVVMSYGGLRGAVAFALVILL. Residues 423–431 lie on the Extracellular side of the membrane; sequence DRTKVPAKD. A helical transmembrane segment spans residues 432–452; it reads YFVATTIVVVFFTVIVQGLTI. Residues 453 to 898 are Cytoplasmic-facing; sequence KPLVKWLRVK…CIQFNRGGRL (446 aa). 2 disordered regions span residues 660–693 and 826–866; these read FTKS…RDLG and EEPQ…PQQE. A compositionally biased stretch (basic residues) spans 663–675; it reads SKPRPRKTSHKKK. A compositionally biased stretch (polar residues) spans 857–866; that stretch reads ESSADIPQQE.

The protein belongs to the monovalent cation:proton antiporter 1 (CPA1) transporter (TC 2.A.36) family. As to quaternary structure, interacts with CHP1 and CHP2. Interacts with ARRB2; facilitates the endocytosis of SLC9A5 from the plasma membrane. Interacts with RACK1; this interaction positively regulates SLC9A5 activity and promote SLC9A5 localization to focal adhesions. Interacts with SCAMP2; this interaction regulates SLC9A5 cell-surface targeting and SLC9A5 activity. Phosphorylated by PRKAA2; promotes its accumulation at the cell surface. Phosphorylated by CSNK2A1 in a manner favoring its beta-arrestin binding and endocytosis. As to expression, highest expression level is detected in brain. Expressed in hippocampal neurons (at protein level).

It is found in the cell membrane. It localises to the recycling endosome membrane. The protein localises to the cell projection. Its subcellular location is the dendritic spine membrane. The protein resides in the synaptic cell membrane. It is found in the cell junction. It localises to the focal adhesion. The enzyme catalyses Na(+)(in) + H(+)(out) = Na(+)(out) + H(+)(in). Plasma membrane Na(+)/H(+) antiporter. Mediates the electroneutral exchange of intracellular H(+) ions for extracellular Na(+) in 1:1 stoichiometry. Responsible for regulating intracellular pH homeostasis, in particular in neural tissues. Acts as a negative regulator of dendritic spine growth. Plays a role in postsynaptic remodeling and signaling. Can also contribute to organellar pH regulation, with consequences for receptor tyrosine kinase trafficking. The polypeptide is Sodium/hydrogen exchanger 5 (Slc9a5) (Mus musculus (Mouse)).